We begin with the raw amino-acid sequence, 197 residues long: Nascent polypeptide-associated complex subunit alpha (197 aa).

The segment covering 1–18 (MTGSTETRHNEKDVKEPQ) has biased composition (basic and acidic residues). A disordered region spans residues 1–30 (MTGSTETRHNEKDVKEPQVDSDADSDNEAI). Positions 19–28 (VDSDADSDNE) are enriched in acidic residues. Positions 58-123 (SRSEKKARKL…AKIEDLTQHA (66 aa)) constitute an NAC-A/B domain. The interval 134–155 (TREAPQLKTVEEDDNEDVEEDS) is disordered. Acidic residues predominate over residues 144–155 (EEDDNEDVEEDS). Residues 158-195 (IEEKDIELVISQANTTRNKAIRALKDADNDIVNAIMSL) enclose the UBA domain.

The protein belongs to the NAC-alpha family.

May promote appropriate targeting of ribosome-nascent polypeptide complexes. This Caenorhabditis briggsae protein is Nascent polypeptide-associated complex subunit alpha.